Reading from the N-terminus, the 585-residue chain is Lipoprotein LpqB (585 aa).

An N-terminal signal peptide occupies residues 1 to 18; that stretch reads MKRLLTVLVVGLVALVSG. Cys-19 carries N-palmitoyl cysteine lipidation. Cys-19 is lipidated: S-diacylglycerol cysteine. The segment at 24–46 is disordered; that stretch reads SSSSPQAIGTVERPAPPSLPKPT. Positions 37-46 are enriched in pro residues; that stretch reads PAPPSLPKPT.

It belongs to the LpqB lipoprotein family. In terms of assembly, interacts with MtrB, probably extracytoplasmically via its sensor domain.

The protein localises to the cell membrane. The protein resides in the secreted. It is found in the cell wall. In terms of biological role, may modulate activity of the MtrAB system in controlling homeostasis of the cell wall and cell division. The sequence is that of Lipoprotein LpqB from Mycolicibacterium smegmatis (strain ATCC 700084 / mc(2)155) (Mycobacterium smegmatis).